Here is a 310-residue protein sequence, read N- to C-terminus: Vomeronasal type-1 receptor 97 (310 aa).

Residues 1-19 are Extracellular-facing; it reads MNKDNILHTDTNIKITLFS. A helical transmembrane segment spans residues 20–40; that stretch reads EVSIGISANSALFFSHLFMLF. Residues 41–49 lie on the Cytoplasmic side of the membrane; the sequence is EKNRSKPID. Residues 50–70 form a helical membrane-spanning segment; that stretch reads LYIAFLSLTQLMLLITIGLIA. The Extracellular portion of the chain corresponds to 71–93; that stretch reads ADMFMSRGRWDSTTCQSLIYLHR. An intrachain disulfide couples C85 to C172. A helical membrane pass occupies residues 94-114; the sequence is LLRGFTLCATCLLNVLWTITL. Topologically, residues 115-131 are cytoplasmic; that stretch reads SPRSSCLTTFKHKSPHH. A helical membrane pass occupies residues 132 to 152; the sequence is ISGAFLFFCVLYISFGSHLFL. Residues 153 to 190 are Extracellular-facing; it reads STIATPNLTSDNFMYVTQSCSFLPMSYSRTSMFSTPMA. N159 is a glycosylation site (N-linked (GlcNAc...) asparagine). A helical transmembrane segment spans residues 191–211; sequence IREALLIGLIGLSSGYMVAFL. The Cytoplasmic portion of the chain corresponds to 212–238; that stretch reads WRHKNQARHLHSTSLSSKVSPEQRATR. Residues 239-259 traverse the membrane as a helical segment; sequence TIMILMSFFVVLYILENVVFY. The Extracellular segment spans residues 260–269; the sequence is SRMTFKDGSM. The helical transmembrane segment at 270-290 threads the bilayer; sequence FYCVQIIVSHSYATISPFVFI. The Cytoplasmic portion of the chain corresponds to 291 to 310; that stretch reads CTEKRIIKLWGSMSSRIVSI.

It belongs to the G-protein coupled receptor 1 family. As to expression, expressed in 1-4% of neurons of the vomeronasal organ. Only one pheromone receptor gene may be expressed in a particular neuron. Not expressed in the main olfactory epithelium.

The protein resides in the cell membrane. Functionally, putative pheromone receptor implicated in the regulation of social as well as reproductive behavior. This Rattus norvegicus (Rat) protein is Vomeronasal type-1 receptor 97 (Vom1r97).